The primary structure comprises 128 residues: Sulfurtransferase TusD (128 aa).

Residue Cys-78 is the Cysteine persulfide intermediate of the active site.

It belongs to the DsrE/TusD family. Heterohexamer, formed by a dimer of trimers. The hexameric TusBCD complex contains 2 copies each of TusB, TusC and TusD. The TusBCD complex interacts with TusE.

It is found in the cytoplasm. Part of a sulfur-relay system required for 2-thiolation of 5-methylaminomethyl-2-thiouridine (mnm(5)s(2)U) at tRNA wobble positions. Accepts sulfur from TusA and transfers it in turn to TusE. The chain is Sulfurtransferase TusD from Citrobacter koseri (strain ATCC BAA-895 / CDC 4225-83 / SGSC4696).